The following is a 313-amino-acid chain: Probable cell division protein WhiA (313 aa).

A DNA-binding region (H-T-H motif) is located at residues 275–308 (SLRELGELAQPPLSKSCVNHRLRKLEQIAEHILA).

This sequence belongs to the WhiA family.

In terms of biological role, involved in cell division and chromosome segregation. In Desulforudis audaxviator (strain MP104C), this protein is Probable cell division protein WhiA.